The sequence spans 338 residues: Eukaryotic translation initiation factor 3 subunit H (338 aa).

The MPN domain maps to 22-154 (VQCDGLAVMK…LKAYRLTPQA (133 aa)).

The protein belongs to the eIF-3 subunit H family. In terms of assembly, component of the eukaryotic translation initiation factor 3 (eIF-3) complex. The eIF-3 complex interacts with pix. Interacts with mxt.

It is found in the cytoplasm. Functionally, component of the eukaryotic translation initiation factor 3 (eIF-3) complex, which is involved in protein synthesis of a specialized repertoire of mRNAs and, together with other initiation factors, stimulates binding of mRNA and methionyl-tRNAi to the 40S ribosome. The eIF-3 complex specifically targets and initiates translation of a subset of mRNAs involved in cell proliferation. The protein is Eukaryotic translation initiation factor 3 subunit H of Drosophila melanogaster (Fruit fly).